The chain runs to 133 residues: Surface presentation of antigens protein SpaK (133 aa).

Belongs to the SpaK family. Homodimer.

Its function is as follows. Required for surface presentation of invasion plasmid antigens. Chaperone specialized in the storage of effectors within the bacterial cytoplasm, maintaining them in a secretion-competent state, and allowing their immediate delivery to target cells upon contact of the bacterium with the host cells. Has been shown to chaperone IpaA, IpgB1, OspC3 and probably also OspB. The polypeptide is Surface presentation of antigens protein SpaK (spaK) (Shigella flexneri).